The primary structure comprises 536 residues: Protoporphyrinogen oxidase, chloroplastic (536 aa).

The transit peptide at 1-36 (MAAAAAAMATATSATAAPPLRIRDAARRTRRRGHVR) directs the protein to the chloroplast. FAD-binding positions include 62–67 (GGGISG), 87–88 (EA), and 111–114 (GPNS). The tract at residues 248 to 272 (TIKTIQERGKNPKPPRDPRLPTPKG) is disordered. A compositionally biased stretch (basic and acidic residues) spans 252-266 (IQERGKNPKPPRDPR). Residue 510–512 (VAL) participates in FAD binding.

It belongs to the protoporphyrinogen/coproporphyrinogen oxidase family. Protoporphyrinogen oxidase subfamily. FAD serves as cofactor.

The protein localises to the plastid. Its subcellular location is the chloroplast. It carries out the reaction protoporphyrinogen IX + 3 O2 = protoporphyrin IX + 3 H2O2. It participates in porphyrin-containing compound metabolism; protoporphyrin-IX biosynthesis; protoporphyrin-IX from protoporphyrinogen-IX: step 1/1. The protein operates within porphyrin-containing compound metabolism; chlorophyll biosynthesis. Catalyzes the 6-electron oxidation of protoporphyrinogen-IX to form protoporphyrin-IX. The sequence is that of Protoporphyrinogen oxidase, chloroplastic (PPOX1) from Oryza sativa subsp. japonica (Rice).